Here is a 347-residue protein sequence, read N- to C-terminus: Ribosomal RNA large subunit methyltransferase M (347 aa).

S-adenosyl-L-methionine contacts are provided by residues Ser184, 217–220, Asp236, Asp256, and Asp272; that span reads APGG. Lys301 serves as the catalytic Proton acceptor.

The protein belongs to the class I-like SAM-binding methyltransferase superfamily. RNA methyltransferase RlmE family. RlmM subfamily. As to quaternary structure, monomer.

The protein resides in the cytoplasm. It catalyses the reaction cytidine(2498) in 23S rRNA + S-adenosyl-L-methionine = 2'-O-methylcytidine(2498) in 23S rRNA + S-adenosyl-L-homocysteine + H(+). Functionally, catalyzes the 2'-O-methylation at nucleotide C2498 in 23S rRNA. The sequence is that of Ribosomal RNA large subunit methyltransferase M from Xanthomonas campestris pv. campestris (strain 8004).